A 165-amino-acid polypeptide reads, in one-letter code: Crossover junction endodeoxyribonuclease RuvC (165 aa).

Residues Asp-7, Glu-67, and Asp-140 contribute to the active site. Positions 7, 67, and 140 each coordinate Mg(2+).

This sequence belongs to the RuvC family. In terms of assembly, homodimer which binds Holliday junction (HJ) DNA. The HJ becomes 2-fold symmetrical on binding to RuvC with unstacked arms; it has a different conformation from HJ DNA in complex with RuvA. In the full resolvosome a probable DNA-RuvA(4)-RuvB(12)-RuvC(2) complex forms which resolves the HJ. Mg(2+) serves as cofactor.

The protein localises to the cytoplasm. It catalyses the reaction Endonucleolytic cleavage at a junction such as a reciprocal single-stranded crossover between two homologous DNA duplexes (Holliday junction).. Functionally, the RuvA-RuvB-RuvC complex processes Holliday junction (HJ) DNA during genetic recombination and DNA repair. Endonuclease that resolves HJ intermediates. Cleaves cruciform DNA by making single-stranded nicks across the HJ at symmetrical positions within the homologous arms, yielding a 5'-phosphate and a 3'-hydroxyl group; requires a central core of homology in the junction. The consensus cleavage sequence is 5'-(A/T)TT(C/G)-3'. Cleavage occurs on the 3'-side of the TT dinucleotide at the point of strand exchange. HJ branch migration catalyzed by RuvA-RuvB allows RuvC to scan DNA until it finds its consensus sequence, where it cleaves and resolves the cruciform DNA. The protein is Crossover junction endodeoxyribonuclease RuvC of Desulfitobacterium hafniense (strain DSM 10664 / DCB-2).